The sequence spans 360 residues: 3-dehydroquinate synthase (360 aa).

Residues 70–75 (DGESLK), 128–129 (TT), Lys141, and Lys150 contribute to the NAD(+) site. Residues Glu182, His243, and His259 each contribute to the Zn(2+) site.

It belongs to the sugar phosphate cyclases superfamily. Dehydroquinate synthase family. NAD(+) is required as a cofactor. Co(2+) serves as cofactor. It depends on Zn(2+) as a cofactor.

The protein localises to the cytoplasm. It carries out the reaction 7-phospho-2-dehydro-3-deoxy-D-arabino-heptonate = 3-dehydroquinate + phosphate. It functions in the pathway metabolic intermediate biosynthesis; chorismate biosynthesis; chorismate from D-erythrose 4-phosphate and phosphoenolpyruvate: step 2/7. In terms of biological role, catalyzes the conversion of 3-deoxy-D-arabino-heptulosonate 7-phosphate (DAHP) to dehydroquinate (DHQ). The chain is 3-dehydroquinate synthase from Thermoplasma volcanium (strain ATCC 51530 / DSM 4299 / JCM 9571 / NBRC 15438 / GSS1).